The sequence spans 634 residues: MTNSNLRTENHFDYVKITLASPERVMEWGQRTLPNGQVVGEVTKPETINYRTLKPEMDGLFCEKIFGPSKDWECHCGKYKRVRHRGIVCERCGVEVTESRVRRHRMGFIKLAAPVSHVWYLKGIPSYVAILLDMPLRDVEQIVYFNCYVVLDPGDHKDLKYKQLLTEDEWLEIEDEIYAEESEIENEPVVGIGAEALKQLLEDLSLEEVAQQLREDINGSKGQKRAKLIKRLRVIDNFIATGARPDWMVLDVIPVIPPDLRPMVQLDGGRFATSDLNDLYRRVINRNNRLARLQEILAPEIIVRNEKRMLQEAVDALIDNGRRGRTVVGANNRPLKSLSDIIEGKQGRFRQNLLGKRVDYSGRSVIVVGPKLKMHQCGLPKEMAIELFQPFVIHRLIRQNIVNNIKAAKKLIQRADDEVMQVLQEVIDGHPIMLNRAPTLHRLGIQAFEPKLVDGRAIQLHPLVCPAFNADFDGDQMAVHVPLAIEAQTEARMLMLASNNILSPATGEPIITPSQDMVLGSYYLTALQPDATQPEFGDRSATFAGLDDVIHAFDDTRIGLHDWVWVRFNGEVEDDDELQEPLKSETLSDGTRIEQWTYRRDRFDEEGALISRYVLTTVGRVVMNHTIIDAVASA.

Zn(2+) contacts are provided by cysteine 74, cysteine 76, cysteine 89, and cysteine 92. The Mg(2+) site is built by aspartate 471, aspartate 473, and aspartate 475.

It belongs to the RNA polymerase beta' chain family. RpoC1 subfamily. As to quaternary structure, in cyanobacteria the RNAP catalytic core is composed of 2 alpha, 1 beta, 1 beta', 1 gamma and 1 omega subunit. When a sigma factor is associated with the core the holoenzyme is formed, which can initiate transcription. Mg(2+) serves as cofactor. Zn(2+) is required as a cofactor.

The catalysed reaction is RNA(n) + a ribonucleoside 5'-triphosphate = RNA(n+1) + diphosphate. DNA-dependent RNA polymerase catalyzes the transcription of DNA into RNA using the four ribonucleoside triphosphates as substrates. The chain is DNA-directed RNA polymerase subunit gamma from Synechococcus sp. (strain CC9902).